Here is a 451-residue protein sequence, read N- to C-terminus: Bifunctional protein GlmU (451 aa).

Positions 1 to 229 are pyrophosphorylase; it reads MERFAVILAA…FDETIGVNDR (229 aa). UDP-N-acetyl-alpha-D-glucosamine contacts are provided by residues 8–11, K22, Q72, and 77–78; these read LAAG and GT. D102 is a binding site for Mg(2+). Residues G139, E154, N169, and N227 each contribute to the UDP-N-acetyl-alpha-D-glucosamine site. N227 is a Mg(2+) binding site. A linker region spans residues 230 to 250; the sequence is VALSQAEAIMRKRTNERLMRE. The N-acetyltransferase stretch occupies residues 251 to 451; it reads GVTFMDPAST…QTNKEGYTKR (201 aa). UDP-N-acetyl-alpha-D-glucosamine is bound by residues R332 and K350. Catalysis depends on H362, which acts as the Proton acceptor. UDP-N-acetyl-alpha-D-glucosamine-binding residues include Y365 and N376. Acetyl-CoA contacts are provided by residues 385–386, A422, and R439; that span reads NY.

The protein in the N-terminal section; belongs to the N-acetylglucosamine-1-phosphate uridyltransferase family. This sequence in the C-terminal section; belongs to the transferase hexapeptide repeat family. In terms of assembly, homotrimer. It depends on Mg(2+) as a cofactor.

The protein localises to the cytoplasm. The catalysed reaction is alpha-D-glucosamine 1-phosphate + acetyl-CoA = N-acetyl-alpha-D-glucosamine 1-phosphate + CoA + H(+). It catalyses the reaction N-acetyl-alpha-D-glucosamine 1-phosphate + UTP + H(+) = UDP-N-acetyl-alpha-D-glucosamine + diphosphate. It participates in nucleotide-sugar biosynthesis; UDP-N-acetyl-alpha-D-glucosamine biosynthesis; N-acetyl-alpha-D-glucosamine 1-phosphate from alpha-D-glucosamine 6-phosphate (route II): step 2/2. The protein operates within nucleotide-sugar biosynthesis; UDP-N-acetyl-alpha-D-glucosamine biosynthesis; UDP-N-acetyl-alpha-D-glucosamine from N-acetyl-alpha-D-glucosamine 1-phosphate: step 1/1. Its pathway is bacterial outer membrane biogenesis; LPS lipid A biosynthesis. In terms of biological role, catalyzes the last two sequential reactions in the de novo biosynthetic pathway for UDP-N-acetylglucosamine (UDP-GlcNAc). The C-terminal domain catalyzes the transfer of acetyl group from acetyl coenzyme A to glucosamine-1-phosphate (GlcN-1-P) to produce N-acetylglucosamine-1-phosphate (GlcNAc-1-P), which is converted into UDP-GlcNAc by the transfer of uridine 5-monophosphate (from uridine 5-triphosphate), a reaction catalyzed by the N-terminal domain. The protein is Bifunctional protein GlmU of Exiguobacterium sp. (strain ATCC BAA-1283 / AT1b).